The following is a 737-amino-acid chain: Serine/threonine-protein kinase dst1 (737 aa).

The region spanning 29-281 (YHIQERLGKG…AKELLNHEFI (253 aa)) is the Protein kinase domain. ATP-binding positions include 35-43 (LGKGSFGQV) and Lys-58. Asp-149 serves as the catalytic Proton acceptor. Disordered stretches follow at residues 305-356 (SMFE…SNNY), 372-475 (KDDA…TTDQ), 491-559 (KPIT…ISNN), and 575-631 (NNNI…ESLS). 4 stretches are compositionally biased toward low complexity: residues 334 to 345 (NNNTVTNYSTVI), 401 to 410 (SSCSSSSSSS), 425 to 444 (PITN…NKIP), and 454 to 473 (ATTT…STTT). A compositionally biased stretch (polar residues) spans 491-503 (KPITSSNSTSVTP). Residues 510-525 (SNNTTTTSNINTPIKP) are compositionally biased toward low complexity. 2 stretches are compositionally biased toward polar residues: residues 529–554 (LKKS…TPLK) and 585–596 (SPTTGQKIIKTN). The segment covering 597-615 (SGGVLKSSGGLSSKRSPSS) has biased composition (low complexity).

This sequence belongs to the protein kinase superfamily. STE Ser/Thr protein kinase family. STE20 subfamily. Mg(2+) is required as a cofactor.

It catalyses the reaction L-seryl-[protein] + ATP = O-phospho-L-seryl-[protein] + ADP + H(+). The enzyme catalyses L-threonyl-[protein] + ATP = O-phospho-L-threonyl-[protein] + ADP + H(+). The sequence is that of Serine/threonine-protein kinase dst1 from Dictyostelium discoideum (Social amoeba).